The primary structure comprises 291 residues: Lipase (291 aa).

The N-terminal stretch at 1–17 (MRSSLVLFFVSAWTALA) is a signal peptide. The propeptide occupies 18–22 (SPIRR). Disulfide bonds link Cys44–Cys290, Cys58–Cys63, and Cys126–Cys129. Catalysis depends on Ser168, which acts as the Nucleophile. Residues Asp223 and His280 each act as charge relay system in the active site.

The protein belongs to the AB hydrolase superfamily. Lipase family.

It carries out the reaction a triacylglycerol + H2O = a diacylglycerol + a fatty acid + H(+). The sequence is that of Lipase (LIP) from Thermomyces lanuginosus (Humicola lanuginosa).